An 85-amino-acid chain; its full sequence is Large ribosomal subunit protein bL27 (85 aa).

A disordered region spans residues 1 to 21 (MAHKKGQGSTQNNRDSAGRRL).

This sequence belongs to the bacterial ribosomal protein bL27 family.

This chain is Large ribosomal subunit protein bL27, found in Wolinella succinogenes (strain ATCC 29543 / DSM 1740 / CCUG 13145 / JCM 31913 / LMG 7466 / NCTC 11488 / FDC 602W) (Vibrio succinogenes).